Reading from the N-terminus, the 622-residue chain is Pyranose 2-oxidase (622 aa).

Residues 1 to 28 (MSASSSDPFHSFAKTSFTSKAAKRATAH) form the signal peptide. Residues 29–37 (SLPPLPGPG) constitute a propeptide that is removed on maturation. The residue at position 167 (H167) is a Tele-8alpha-FAD histidine. Positions 449 and 451 each coordinate substrate. The active-site Proton acceptor is H546. The active site involves N591.

Belongs to the GMC oxidoreductase family. Homotetramer. Requires FAD as cofactor.

It is found in the periplasm. The catalysed reaction is D-glucose + O2 = 2-dehydro-D-glucose + H2O2. In terms of biological role, catalyzes the oxidation of various aldopyranoses and disaccharides on carbon-2 to the corresponding 2-keto sugars concomitant with the reduction of O(2) to H(2)O(2). Plays an important role in lignin degradation of wood rot fungi by supplying the essential cosubstrate H(2)O(2) for the ligninolytic peroxidases, lignin peroxidase and manganese-dependent peroxidase. The preferred substrate is D-glucose which is converted to 2-dehydro-D-glucose, an intermediate of a secondary metabolic pathway leading to the antibiotic cortalcerone. Also acts on D-xylose, together with D-glucose the major sugars derived from wood, on L-sorbose, D-galactose and 1,5-anhydroglucitol, a diagnostic marker of diabetes mellitus. In Trametes hirsuta (White-rot fungus), this protein is Pyranose 2-oxidase (P2OX).